Reading from the N-terminus, the 121-residue chain is MARIAGVDIPRDKRVVISLTYIYGIGKATAQKILAEAGVSEDTRVRDLTEEELGKIREIVDRLKVEGDLRREVSLNIKRLMEIGCYRGLRHRRGLPVRGQNTKNNARTRKGPRRTVANKKK.

The interval 94-121 is disordered; the sequence is GLPVRGQNTKNNARTRKGPRRTVANKKK. The segment covering 106-121 has biased composition (basic residues); sequence ARTRKGPRRTVANKKK.

This sequence belongs to the universal ribosomal protein uS13 family. As to quaternary structure, part of the 30S ribosomal subunit. Forms a loose heterodimer with protein S19. Forms two bridges to the 50S subunit in the 70S ribosome.

Located at the top of the head of the 30S subunit, it contacts several helices of the 16S rRNA. In the 70S ribosome it contacts the 23S rRNA (bridge B1a) and protein L5 of the 50S subunit (bridge B1b), connecting the 2 subunits; these bridges are implicated in subunit movement. Contacts the tRNAs in the A and P-sites. This is Small ribosomal subunit protein uS13 from Anoxybacillus flavithermus (strain DSM 21510 / WK1).